Here is a 195-residue protein sequence, read N- to C-terminus: MRTASISRRTAETDVSVSIDLDGTGKATIATSVGFLDHMLELFARHGLFDVTIKVEGDLHVDQHHTTEDTGIALGQAVAKALGDKRGIARYADIHLPMDETLSRIAIDISGRPFLVFRTTFRVEKIGQFDTELVREFFQAFAMNAGITLHVETLYGDNAHHIAESVFKGLARALRKAVAIDPREDGRVPSTKGSL.

This sequence belongs to the imidazoleglycerol-phosphate dehydratase family.

It is found in the cytoplasm. It carries out the reaction D-erythro-1-(imidazol-4-yl)glycerol 3-phosphate = 3-(imidazol-4-yl)-2-oxopropyl phosphate + H2O. It participates in amino-acid biosynthesis; L-histidine biosynthesis; L-histidine from 5-phospho-alpha-D-ribose 1-diphosphate: step 6/9. This is Imidazoleglycerol-phosphate dehydratase from Methylorubrum populi (strain ATCC BAA-705 / NCIMB 13946 / BJ001) (Methylobacterium populi).